The sequence spans 437 residues: Chaperone SurA (437 aa).

A signal peptide spans 1 to 27 (MHNHVFKTIARHGLIALFFFFSISAMA). PpiC domains lie at 179–280 (QDEF…KLLN) and 290–388 (VDQT…QVLE).

The protein localises to the periplasm. It catalyses the reaction [protein]-peptidylproline (omega=180) = [protein]-peptidylproline (omega=0). In terms of biological role, chaperone involved in the correct folding and assembly of outer membrane proteins. Recognizes specific patterns of aromatic residues and the orientation of their side chains, which are found more frequently in integral outer membrane proteins. May act in both early periplasmic and late outer membrane-associated steps of protein maturation. The chain is Chaperone SurA from Methylobacillus flagellatus (strain ATCC 51484 / DSM 6875 / VKM B-1610 / KT).